Consider the following 710-residue polypeptide: Polyribonucleotide nucleotidyltransferase (710 aa).

Mg(2+)-binding residues include Asp-489 and Asp-495. Positions 556 to 615 (PKIDTIKIDVDKIKVVIGKGGETIDKIIAETGVKIDIDDEGNVSIYSSDQAAIDRTKEII) constitute a KH domain. An S1 motif domain is found at 625-693 (GEVYHAKVIR…EKGRVDASMK (69 aa)).

The protein belongs to the polyribonucleotide nucleotidyltransferase family. Mg(2+) serves as cofactor.

Its subcellular location is the cytoplasm. It catalyses the reaction RNA(n+1) + phosphate = RNA(n) + a ribonucleoside 5'-diphosphate. Its function is as follows. Involved in mRNA degradation. Catalyzes the phosphorolysis of single-stranded polyribonucleotides processively in the 3'- to 5'-direction. The protein is Polyribonucleotide nucleotidyltransferase of Streptococcus pyogenes serotype M3 (strain ATCC BAA-595 / MGAS315).